The sequence spans 201 residues: Ran-specific GTPase-activating protein 1 (201 aa).

2 stretches are compositionally biased toward basic and acidic residues: residues 1 to 17 (MSSE…EEAA) and 32 to 66 (KKAE…IHFE). A disordered region spans residues 1–66 (MSSEDKKPVV…APESPDIHFE (66 aa)). Ser-60 is subject to Phosphoserine. Residues 64–200 (HFEPVVHLEK…FEKAQEINKK (137 aa)) enclose the RanBD1 domain.

Belongs to the RANBP1 family. Interacts with GSP1 and PRP20.

Its subcellular location is the cytoplasm. The protein localises to the nucleus. In terms of biological role, important for the export of protein containing nuclear export signal (NES) out of the nucleus. Stimulates the GTPase activity of GSP1 and GSP2. The chain is Ran-specific GTPase-activating protein 1 (YRB1) from Saccharomyces cerevisiae (strain ATCC 204508 / S288c) (Baker's yeast).